Reading from the N-terminus, the 173-residue chain is Shikimate kinase 1 (173 aa).

An ATP-binding site is contributed by 14–19; sequence GAGKST. S18 lines the Mg(2+) pocket. D36, R60, and G82 together coordinate substrate. R120 contributes to the ATP binding site. Substrate is bound at residue R140. An ATP-binding site is contributed by Q157.

Belongs to the shikimate kinase family. Monomer. Mg(2+) is required as a cofactor.

The protein resides in the cytoplasm. It carries out the reaction shikimate + ATP = 3-phosphoshikimate + ADP + H(+). The protein operates within metabolic intermediate biosynthesis; chorismate biosynthesis; chorismate from D-erythrose 4-phosphate and phosphoenolpyruvate: step 5/7. Catalyzes the specific phosphorylation of the 3-hydroxyl group of shikimic acid using ATP as a cosubstrate. The sequence is that of Shikimate kinase 1 from Erwinia tasmaniensis (strain DSM 17950 / CFBP 7177 / CIP 109463 / NCPPB 4357 / Et1/99).